The primary structure comprises 618 residues: Proline--tRNA ligase (618 aa).

This sequence belongs to the class-II aminoacyl-tRNA synthetase family. ProS type 1 subfamily. As to quaternary structure, homodimer.

Its subcellular location is the cytoplasm. It carries out the reaction tRNA(Pro) + L-proline + ATP = L-prolyl-tRNA(Pro) + AMP + diphosphate. Its function is as follows. Catalyzes the attachment of proline to tRNA(Pro) in a two-step reaction: proline is first activated by ATP to form Pro-AMP and then transferred to the acceptor end of tRNA(Pro). As ProRS can inadvertently accommodate and process non-cognate amino acids such as alanine and cysteine, to avoid such errors it has two additional distinct editing activities against alanine. One activity is designated as 'pretransfer' editing and involves the tRNA(Pro)-independent hydrolysis of activated Ala-AMP. The other activity is designated 'posttransfer' editing and involves deacylation of mischarged Ala-tRNA(Pro). The misacylated Cys-tRNA(Pro) is not edited by ProRS. The chain is Proline--tRNA ligase from Streptococcus pyogenes serotype M1.